A 129-amino-acid polypeptide reads, in one-letter code: Lysozyme C (129 aa).

One can recognise a C-type lysozyme domain in the interval 1–129 (KVYGRCELAA…VSVWTRGCRL (129 aa)). 4 cysteine pairs are disulfide-bonded: Cys6–Cys127, Cys30–Cys115, Cys64–Cys80, and Cys76–Cys94. Active-site residues include Glu35 and Asp52.

The protein belongs to the glycosyl hydrolase 22 family. As to quaternary structure, monomer.

Its subcellular location is the secreted. The catalysed reaction is Hydrolysis of (1-&gt;4)-beta-linkages between N-acetylmuramic acid and N-acetyl-D-glucosamine residues in a peptidoglycan and between N-acetyl-D-glucosamine residues in chitodextrins.. Its function is as follows. Lysozymes have primarily a bacteriolytic function; those in tissues and body fluids are associated with the monocyte-macrophage system and enhance the activity of immunoagents. This Lophura leucomelanos (Kalij pheasant) protein is Lysozyme C (LYZ).